The sequence spans 176 residues: NAD(P)H-quinone oxidoreductase subunit 6, chloroplastic (176 aa).

The next 5 membrane-spanning stretches (helical) occupy residues 10-30 (FLLV…VLLA), 32-52 (PIYS…FYIL), 61-81 (AQLL…VMFI), 92-112 (LWTV…VSLI), and 152-172 (FFIP…GAIA).

It belongs to the complex I subunit 6 family. NDH is composed of at least 16 different subunits, 5 of which are encoded in the nucleus.

Its subcellular location is the plastid. The protein localises to the chloroplast thylakoid membrane. The catalysed reaction is a plastoquinone + NADH + (n+1) H(+)(in) = a plastoquinol + NAD(+) + n H(+)(out). It carries out the reaction a plastoquinone + NADPH + (n+1) H(+)(in) = a plastoquinol + NADP(+) + n H(+)(out). Functionally, NDH shuttles electrons from NAD(P)H:plastoquinone, via FMN and iron-sulfur (Fe-S) centers, to quinones in the photosynthetic chain and possibly in a chloroplast respiratory chain. The immediate electron acceptor for the enzyme in this species is believed to be plastoquinone. Couples the redox reaction to proton translocation, and thus conserves the redox energy in a proton gradient. This chain is NAD(P)H-quinone oxidoreductase subunit 6, chloroplastic (ndhG), found in Helianthus annuus (Common sunflower).